The following is a 298-amino-acid chain: Lipoyl synthase (298 aa).

Residues Cys40, Cys45, Cys51, Cys67, Cys71, Cys74, and Ser280 each contribute to the [4Fe-4S] cluster site. Residues 53–269 (AVRRTATFMI…KEIALSKGFT (217 aa)) enclose the Radical SAM core domain.

This sequence belongs to the radical SAM superfamily. Lipoyl synthase family. Requires [4Fe-4S] cluster as cofactor.

The protein localises to the cytoplasm. The catalysed reaction is [[Fe-S] cluster scaffold protein carrying a second [4Fe-4S](2+) cluster] + N(6)-octanoyl-L-lysyl-[protein] + 2 oxidized [2Fe-2S]-[ferredoxin] + 2 S-adenosyl-L-methionine + 4 H(+) = [[Fe-S] cluster scaffold protein] + N(6)-[(R)-dihydrolipoyl]-L-lysyl-[protein] + 4 Fe(3+) + 2 hydrogen sulfide + 2 5'-deoxyadenosine + 2 L-methionine + 2 reduced [2Fe-2S]-[ferredoxin]. The protein operates within protein modification; protein lipoylation via endogenous pathway; protein N(6)-(lipoyl)lysine from octanoyl-[acyl-carrier-protein]. Functionally, catalyzes the radical-mediated insertion of two sulfur atoms into the C-6 and C-8 positions of the octanoyl moiety bound to the lipoyl domains of lipoate-dependent enzymes, thereby converting the octanoylated domains into lipoylated derivatives. The polypeptide is Lipoyl synthase (Geobacillus sp. (strain WCH70)).